The following is a 235-amino-acid chain: MKDLLQYAACFLAIFSTGFLIVATRTDCWMVNADDSLEVSTKCRGLWWECVTNAFDGIRTCDEYDSIYAEHPLKLVVTRALMITADILAGFGFITLLLGLDCVKFLPDEPHIKVRLCFVAGTVLLIAGTPGIIGSVWYAVDVYVERSSLVLHNIFLGIQYKFGWSCWLGMAGSLGCFLAGALLTCCLYLFKDVGPERNYPYAMRKPYSTAGVSMAKSYKAPRTETAKMYAVDTRV.

The Cytoplasmic segment spans residues 1–3 (MKD). A helical transmembrane segment spans residues 4 to 24 (LLQYAACFLAIFSTGFLIVAT). Residues 25-79 (RTDCWMVNADDSLEVSTKCRGLWWECVTNAFDGIRTCDEYDSIYAEHPLKLVVTR) are Extracellular-facing. A helical transmembrane segment spans residues 80-100 (ALMITADILAGFGFITLLLGL). Residues 101-115 (DCVKFLPDEPHIKVR) are Cytoplasmic-facing. The chain crosses the membrane as a helical span at residues 116 to 136 (LCFVAGTVLLIAGTPGIIGSV). At 137-169 (WYAVDVYVERSSLVLHNIFLGIQYKFGWSCWLG) the chain is on the extracellular side. A helical transmembrane segment spans residues 170–190 (MAGSLGCFLAGALLTCCLYLF). Residues 191 to 235 (KDVGPERNYPYAMRKPYSTAGVSMAKSYKAPRTETAKMYAVDTRV) are Cytoplasmic-facing. Positions 233–235 (TRV) match the Interaction with TJP1 motif.

Belongs to the claudin family. In terms of assembly, can form heteropolymeric tight junction strands with other claudins. Interacts with CLDN19. Interacts (via PDZ-binding motif TRV) with TJP1 (via PDZ domain). Cannot form tight junction strands on its own.

Its subcellular location is the cell junction. It localises to the tight junction. The protein localises to the cell membrane. The catalysed reaction is Mg(2+)(in) = Mg(2+)(out). It catalyses the reaction Ca(2+)(in) = Ca(2+)(out). The enzyme catalyses Na(+)(in) = Na(+)(out). It carries out the reaction K(+)(in) = K(+)(out). The catalysed reaction is Rb(+)(in) = Rb(+)(out). It catalyses the reaction Cs(+)(in) = Cs(+)(out). The enzyme catalyses Li(+)(in) = Li(+)(out). In terms of biological role, forms paracellular channels: coassembles with CLDN19 into tight junction strands with cation-selective channels through the strands, conveying epithelial permeability in a process known as paracellular tight junction permeability. Involved in the maintenance of ion gradients along the nephron. In the thick ascending limb (TAL) of Henle's loop, facilitates sodium paracellular permeability from the interstitial compartment to the lumen, contributing to the lumen-positive transepithelial potential that drives paracellular magnesium and calcium reabsorption. This is Claudin-16 from Rattus norvegicus (Rat).